Here is a 380-residue protein sequence, read N- to C-terminus: Putative glutamate--cysteine ligase 2 (380 aa).

This sequence belongs to the glutamate--cysteine ligase type 2 family. YbdK subfamily.

The catalysed reaction is L-cysteine + L-glutamate + ATP = gamma-L-glutamyl-L-cysteine + ADP + phosphate + H(+). Its function is as follows. ATP-dependent carboxylate-amine ligase which exhibits weak glutamate--cysteine ligase activity. This chain is Putative glutamate--cysteine ligase 2, found in Pseudomonas entomophila (strain L48).